A 466-amino-acid polypeptide reads, in one-letter code: Putative D-3-phosphoglycerate dehydrogenase (466 aa).

Basic and acidic residues predominate over residues Met1–Leu15. A disordered region spans residues Met1–Asn26. Residues Asn16–Asn26 show a composition bias toward polar residues. Ser87 bears the Phosphoserine mark. NAD(+) contacts are provided by residues His205–Ile206 and Asp225. A Phosphoserine modification is found at Ser258. NAD(+)-binding positions include Ala282 to Arg284 and Asp308. The active site involves Arg284. Glu313 is an active-site residue. The active-site Proton donor is His344. An NAD(+)-binding site is contributed by His344–Gly347. In terms of domain architecture, ACT spans Arg396–Tyr466.

The protein belongs to the D-isomer specific 2-hydroxyacid dehydrogenase family.

The catalysed reaction is (2R)-3-phosphoglycerate + NAD(+) = 3-phosphooxypyruvate + NADH + H(+). It catalyses the reaction (R)-2-hydroxyglutarate + NAD(+) = 2-oxoglutarate + NADH + H(+). The protein operates within amino-acid biosynthesis; L-serine biosynthesis; L-serine from 3-phospho-D-glycerate: step 1/3. Its function is as follows. Catalyzes the reversible oxidation of 3-phospho-D-glycerate to 3-phosphonooxypyruvate, the first step of the phosphorylated L-serine biosynthesis pathway. Also catalyzes the reversible oxidation of 2-hydroxyglutarate to 2-oxoglutarate. The chain is Putative D-3-phosphoglycerate dehydrogenase from Schizosaccharomyces pombe (strain 972 / ATCC 24843) (Fission yeast).